A 356-amino-acid polypeptide reads, in one-letter code: Neutral protease 2 homolog MEP5 (356 aa).

The N-terminal stretch at 1 to 19 (MRVSSSLIALAALAVQALA) is a signal peptide. Residues 20–179 (LPVNELAERD…ASAIPELDKR (160 aa)) constitute a propeptide that is removed on maturation. 2 disulfide bridges follow: cysteine 187–cysteine 259 and cysteine 266–cysteine 284. Residue histidine 308 coordinates Zn(2+). The active site involves glutamate 309. Zn(2+) is bound by residues histidine 312 and aspartate 323.

Belongs to the peptidase M35 family. It depends on Zn(2+) as a cofactor.

It is found in the secreted. The enzyme catalyses Preferential cleavage of bonds with hydrophobic residues in P1'. Also 3-Asn-|-Gln-4 and 8-Gly-|-Ser-9 bonds in insulin B chain.. Secreted metalloproteinase that allows assimilation of proteinaceous substrates. Shows high activities on basic nuclear substrates such as histone and protamine. May be involved in virulence. This Coccidioides posadasii (strain C735) (Valley fever fungus) protein is Neutral protease 2 homolog MEP5 (MEP5).